The sequence spans 1628 residues: Lysine-specific histone demethylase 1 homolog 3 (1628 aa).

A disordered region spans residues 1–71; sequence MDGKEKKSGS…KKLSALGKDS (71 aa). A compositionally biased stretch (acidic residues) spans 19 to 28; it reads FDDDADDDEP. Over residues 43 to 64 the composition is skewed to basic and acidic residues; sequence KDKVETESTGKQRQKQVVEKKL. The region spanning 378–478 is the SWIRM domain; that stretch reads GRAAAVTAGL…AGISSVNGKA (101 aa). FAD-binding residues include glutamate 647, arginine 649, arginine 655, and glutamate 1077. The disordered stretch occupies residues 1271 to 1317; the sequence is SGKKSLRQANTTNTSRIRRKLNSPDTDSKGKLSNGNDVKTDEEFEDN.

Belongs to the flavin monoamine oxidase family. It depends on FAD as a cofactor.

Its function is as follows. Probable histone demethylase that reduces the levels of histone H3 'Lys-4' methylation in chromatin. In Arabidopsis thaliana (Mouse-ear cress), this protein is Lysine-specific histone demethylase 1 homolog 3 (LDL3).